Consider the following 315-residue polypeptide: DNA-directed RNA polymerase subunit alpha (315 aa).

Residues 1–228 form an alpha N-terminal domain (alpha-NTD) region; that stretch reads MAQFQIECVE…DLFNPLKDIS (228 aa). An alpha C-terminal domain (alpha-CTD) region spans residues 238-315; sequence IPDDPTAQIP…LPQERSSKHS (78 aa).

Belongs to the RNA polymerase alpha chain family. As to quaternary structure, in cyanobacteria the RNAP catalytic core is composed of 2 alpha, 1 beta, 1 beta', 1 gamma and 1 omega subunit. When a sigma factor is associated with the core the holoenzyme is formed, which can initiate transcription.

The catalysed reaction is RNA(n) + a ribonucleoside 5'-triphosphate = RNA(n+1) + diphosphate. Functionally, DNA-dependent RNA polymerase catalyzes the transcription of DNA into RNA using the four ribonucleoside triphosphates as substrates. This Trichormus variabilis (strain ATCC 29413 / PCC 7937) (Anabaena variabilis) protein is DNA-directed RNA polymerase subunit alpha.